A 297-amino-acid chain; its full sequence is Homoserine kinase (297 aa).

Position 82-92 (82-92 (PLTRGLGSSAS)) interacts with ATP.

The protein belongs to the GHMP kinase family. Homoserine kinase subfamily.

Its subcellular location is the cytoplasm. It catalyses the reaction L-homoserine + ATP = O-phospho-L-homoserine + ADP + H(+). It functions in the pathway amino-acid biosynthesis; L-threonine biosynthesis; L-threonine from L-aspartate: step 4/5. In terms of biological role, catalyzes the ATP-dependent phosphorylation of L-homoserine to L-homoserine phosphate. This chain is Homoserine kinase, found in Bacillus cereus (strain ATCC 14579 / DSM 31 / CCUG 7414 / JCM 2152 / NBRC 15305 / NCIMB 9373 / NCTC 2599 / NRRL B-3711).